The following is a 408-amino-acid chain: Imidazolonepropionase (408 aa).

H73 and H75 together coordinate Fe(3+). Positions 73 and 75 each coordinate Zn(2+). R82, Y145, and H178 together coordinate 4-imidazolone-5-propanoate. N-formimidoyl-L-glutamate is bound at residue Y145. H243 is a Fe(3+) binding site. Residue H243 participates in Zn(2+) binding. Q246 serves as a coordination point for 4-imidazolone-5-propanoate. D318 serves as a coordination point for Fe(3+). D318 contacts Zn(2+). N-formimidoyl-L-glutamate contacts are provided by N320 and G322. S323 lines the 4-imidazolone-5-propanoate pocket.

The protein belongs to the metallo-dependent hydrolases superfamily. HutI family. Requires Zn(2+) as cofactor. It depends on Fe(3+) as a cofactor.

It localises to the cytoplasm. It carries out the reaction 4-imidazolone-5-propanoate + H2O = N-formimidoyl-L-glutamate. Its pathway is amino-acid degradation; L-histidine degradation into L-glutamate; N-formimidoyl-L-glutamate from L-histidine: step 3/3. In terms of biological role, catalyzes the hydrolytic cleavage of the carbon-nitrogen bond in imidazolone-5-propanoate to yield N-formimidoyl-L-glutamate. It is the third step in the universal histidine degradation pathway. In Shewanella sp. (strain ANA-3), this protein is Imidazolonepropionase.